The chain runs to 339 residues: Ribosomal RNA small subunit methyltransferase H (339 aa).

Residues Gly-56–His-58, Asp-76, Phe-102, Asp-123, and Gln-130 each bind S-adenosyl-L-methionine. Disordered stretches follow at residues Arg-274–Val-309 and Leu-320–Ser-339. The span at Arg-325–Ser-339 shows a compositional bias: polar residues.

This sequence belongs to the methyltransferase superfamily. RsmH family.

It localises to the cytoplasm. The enzyme catalyses cytidine(1402) in 16S rRNA + S-adenosyl-L-methionine = N(4)-methylcytidine(1402) in 16S rRNA + S-adenosyl-L-homocysteine + H(+). Its function is as follows. Specifically methylates the N4 position of cytidine in position 1402 (C1402) of 16S rRNA. In Psychrobacter sp. (strain PRwf-1), this protein is Ribosomal RNA small subunit methyltransferase H.